A 1463-amino-acid polypeptide reads, in one-letter code: Regulating synaptic membrane exocytosis protein 1 (1463 aa).

The interval 1-26 (MSSAVGPRGPRPPTVPPPMQELPDLS) is disordered. The span at 9-20 (GPRPPTVPPPMQ) shows a compositional bias: pro residues. The RabBD domain occupies 22-205 (LPDLSHLTEE…TKSGAWFFGS (184 aa)). The segment at 133–193 (KDDAPTCGIC…VCNLCRKQQE (61 aa)) adopts an FYVE-type zinc-finger fold. 8 residues coordinate Zn(2+): Cys139, Cys142, Cys155, Cys158, Cys163, Cys166, Cys185, and Cys188. The tract at residues 205–393 (SGPQQPSQDG…DVELESESVS (189 aa)) is disordered. The span at 206-222 (GPQQPSQDGTLSDTATG) shows a compositional bias: polar residues. Over residues 227 to 240 (VPREKKARLQERSR) the composition is skewed to basic and acidic residues. Residues 241–256 (SQTPLSTAAVSSQDTA) show a composition bias toward polar residues. Basic and acidic residues predominate over residues 327–372 (ADERERKERRETRRLEKGRSQDYPDRLEKREDGRVAEDEKQRKEEE). Acidic residues predominate over residues 381-391 (SCEDVELESES). Ser413 carries the phosphoserine modification. Residues 440-526 (RTTMPKESGA…EPQVEIIVSR (87 aa)) enclose the PDZ domain. The interval 533–567 (RIPESSHPPLESSSSSFESQKMERPSISVISPTSP) is disordered. Low complexity predominate over residues 535–551 (PESSHPPLESSSSSFES). A phosphoserine mark is found at Ser563 and Ser566. One can recognise a C2 1 domain in the interval 577–700 (LPGQLSVKLW…ALLDDEPHWY (124 aa)). Positions 705 to 856 (HDESSLPLPQ…YSSEPDSELL (152 aa)) are disordered. The residue at position 716 (Ser716) is a Phosphoserine. A compositionally biased stretch (polar residues) spans 770 to 779 (ATTLTVPEQQ). Ser812 carries the phosphoserine modification. The segment covering 827–844 (RHHDASRSLADHRSRHAE) has biased composition (basic and acidic residues). Position 866 is a phosphoserine (Ser866). The interval 874–1049 (SELQPSLDRA…RQLPQVPVRS (176 aa)) is disordered. Positions 928–941 (PENDRHSRKSERSS) are enriched in basic and acidic residues. Positions 1021–1035 (QGSPTQSPPADTSFG) are enriched in polar residues. Ser1023 carries the phosphoserine modification. Thr1025 carries the phosphothreonine modification. A phosphoserine mark is found at Ser1027, Ser1079, Ser1081, Ser1082, Ser1110, Ser1111, and Ser1113. Residues 1104–1161 (DNASAKSSDSDVSDVSAISRASSTSRLSSTSFMSEQSERPRGRISSFTPKMQGRRMGT) are disordered. A compositionally biased stretch (low complexity) spans 1116-1137 (SDVSAISRASSTSRLSSTSFMS). Ser1187 carries the post-translational modification Phosphoserine. The interval 1216 to 1266 (RSRSTSQLSQTESGHKKLKSTIQRSTETGMAAEMRKMVRQPSRESTDGSIN) is disordered. Positions 1248 to 1261 (EMRKMVRQPSREST) are enriched in basic and acidic residues. Residues 1309 to 1427 (AMGDIQIGME…DLSSMVIGWY (119 aa)) enclose the C2 2 domain. Phosphoserine is present on residues Ser1448, Ser1451, Ser1454, and Ser1463.

In terms of assembly, binds SNAP25, SYT1 and CACNA1B. Interaction with SYT1 is enhanced by calcium ions. Interaction with SNAP25 is weaker in the presence of calcium ions. Interacts with TSPOAP1 and RIMBP2; interacts with PPFIA3 and PPFIA4. Interacts with ERC1. Interacts with RAB3A, RAB3B and RAB3D that have been activated by GTP-binding. Interacts with RAB3C, RAB10, RAB26 and RAB37. Binds UNC13A. Post-translationally, phosphorylated by BRSK1.

Its subcellular location is the cell membrane. It localises to the synapse. The protein resides in the presynaptic cell membrane. In terms of biological role, rab effector involved in exocytosis. May act as scaffold protein that regulates neurotransmitter release at the active zone. Essential for maintaining normal probability of neurotransmitter release and for regulating release during short-term synaptic plasticity. Plays a role in dendrite formation by melanocytes. The sequence is that of Regulating synaptic membrane exocytosis protein 1 (Rims1) from Mus musculus (Mouse).